Here is an 83-residue protein sequence, read N- to C-terminus: Exodeoxyribonuclease 7 small subunit (83 aa).

It belongs to the XseB family. As to quaternary structure, heterooligomer composed of large and small subunits.

The protein localises to the cytoplasm. It carries out the reaction Exonucleolytic cleavage in either 5'- to 3'- or 3'- to 5'-direction to yield nucleoside 5'-phosphates.. Bidirectionally degrades single-stranded DNA into large acid-insoluble oligonucleotides, which are then degraded further into small acid-soluble oligonucleotides. In Novosphingobium aromaticivorans (strain ATCC 700278 / DSM 12444 / CCUG 56034 / CIP 105152 / NBRC 16084 / F199), this protein is Exodeoxyribonuclease 7 small subunit.